Here is a 695-residue protein sequence, read N- to C-terminus: WD repeat-containing protein 93 (695 aa).

Residues 1 to 35 (MSSFKGNQAQKRRLSVFPKGPLEIPSPTEADWPKD) are disordered. One copy of the WD repeat lies at 421-460 (PCAAPIVMSQISSFSSYLALVCEDGVLILWDLAEGFLFGV).

Testis-specific. Expressed in spermatogonia, spermatocytes and spermatids.

The protein is WD repeat-containing protein 93 (Wdr93) of Mus musculus (Mouse).